A 296-amino-acid chain; its full sequence is MGIIKGVLFSIVLINLSLVVFCGYPRRPVDVPFWKNYEPSWASHHIKFLNGGTTTDLILDRSSGAGFQSKKSYLFGHFSMKMRLVGGDSAGVVTAFYLSSNNAEHDEIDFEFLGNRTGQPYILQTNVFTGGKGNREQRIYLWFDPTKGYHSYSVLWNTYLIVIFVDDVPIRAFKNSKDLGVKFPFNQPMKIYSSLWDADDWATRGGLEKTNWANAPFTASYTSFHVDGCEAATPQEVQVCNTKGMKWWDQKAFQDLDALQYRRLRWVRQKYTVYNYCTDKARYPVPPPECTKDRDI.

The first 22 residues, 1 to 22 (MGIIKGVLFSIVLINLSLVVFC), serve as a signal peptide directing secretion. The GH16 domain occupies 23 to 221 (GYPRRPVDVP…WANAPFTASY (199 aa)). Glu-107 acts as the Nucleophile in catalysis. The active-site Proton donor is Glu-111. Glu-111 serves as a coordination point for xyloglucan. Asn-115 carries an N-linked (GlcNAc...) asparagine glycan. Xyloglucan-binding positions include 124–126 (QTN), 134–136 (NRE), 200–201 (DW), and Gly-205. Cystine bridges form between Cys-229–Cys-240 and Cys-277–Cys-290. Arg-282 is a binding site for xyloglucan.

This sequence belongs to the glycosyl hydrolase 16 family. XTH group 1 subfamily. Post-translationally, contains at least one intrachain disulfide bond essential for its enzymatic activity.

It is found in the secreted. The protein localises to the cell wall. Its subcellular location is the extracellular space. It localises to the apoplast. It catalyses the reaction breaks a beta-(1-&gt;4) bond in the backbone of a xyloglucan and transfers the xyloglucanyl segment on to O-4 of the non-reducing terminal glucose residue of an acceptor, which can be a xyloglucan or an oligosaccharide of xyloglucan.. Functionally, catalyzes xyloglucan endohydrolysis (XEH) and/or endotransglycosylation (XET). Cleaves and religates xyloglucan polymers, an essential constituent of the primary cell wall, and thereby participates in cell wall construction of growing tissues. The polypeptide is Probable xyloglucan endotransglucosylase/hydrolase 1 (XTH1) (Solanum lycopersicum (Tomato)).